Consider the following 172-residue polypeptide: Translationally-controlled tumor protein (172 aa).

Positions 1-172 constitute a TCTP domain; the sequence is MIIYRDLISH…FKDGLEMEKC (172 aa). Phosphoserine; by PLK1 is present on serine 46. Position 53 is a phosphoserine (serine 53). Phosphoserine; by PLK1 is present on serine 64. The interval 70 to 172 is required for reduction of TSC22D1 protein stability; it reads VDIVMNHHLQ…FKDGLEMEKC (103 aa).

It belongs to the TCTP family. In terms of assembly, homodimer. Interacts with STEAP3. Interacts with TSC22D1; interaction results in the destabilization of TSC22D1 protein.

It is found in the cytoplasm. Its function is as follows. Involved in calcium binding and microtubule stabilization. Acts as a negative regulator of TSC22D1-mediated apoptosis, via interaction with and destabilization of TSC22D1 protein. This Bos taurus (Bovine) protein is Translationally-controlled tumor protein (TPT1).